Consider the following 296-residue polypeptide: tRNA pseudouridine synthase B (296 aa).

D38 (nucleophile) is an active-site residue.

Belongs to the pseudouridine synthase TruB family. Type 1 subfamily.

It carries out the reaction uridine(55) in tRNA = pseudouridine(55) in tRNA. Its function is as follows. Responsible for synthesis of pseudouridine from uracil-55 in the psi GC loop of transfer RNAs. The sequence is that of tRNA pseudouridine synthase B from Ehrlichia ruminantium (strain Gardel).